The chain runs to 490 residues: Chromosomal replication initiator protein DnaA (490 aa).

Positions 1–91 (MTMKGGVASQ…GELWAAHDAT (91 aa)) are domain I, interacts with DnaA modulators. Positions 91–147 (TGRRIDLKSRLEFEAAAGAYVEATPKAVAAEPIEIVLPVSTDAPTVVAPSAKSPRTQ) are domain II. The domain III, AAA+ region stretch occupies residues 148–370 (GLQERFTFET…GALNTLSARA (223 aa)). Residues Gly-192, Gly-194, Lys-195, and Thr-196 each contribute to the ATP site. The interval 371–490 (GEGLSRMTLD…LETLTRKLRG (120 aa)) is domain IV, binds dsDNA.

This sequence belongs to the DnaA family. As to quaternary structure, oligomerizes as a right-handed, spiral filament on DNA at oriC.

Its subcellular location is the cytoplasm. In terms of biological role, plays an essential role in the initiation and regulation of chromosomal replication. ATP-DnaA binds to the origin of replication (oriC) to initiate formation of the DNA replication initiation complex once per cell cycle. Binds the DnaA box (a 9 base pair repeat at the origin) and separates the double-stranded (ds)DNA. Forms a right-handed helical filament on oriC DNA; dsDNA binds to the exterior of the filament while single-stranded (ss)DNA is stabiized in the filament's interior. The ATP-DnaA-oriC complex binds and stabilizes one strand of the AT-rich DNA unwinding element (DUE), permitting loading of DNA polymerase. After initiation quickly degrades to an ADP-DnaA complex that is not apt for DNA replication. Binds acidic phospholipids. This Caulobacter vibrioides (strain ATCC 19089 / CIP 103742 / CB 15) (Caulobacter crescentus) protein is Chromosomal replication initiator protein DnaA.